We begin with the raw amino-acid sequence, 367 residues long: Putrescine-binding periplasmic protein SpuD (367 aa).

An N-terminal signal peptide occupies residues 1–24 (MMKRFGKTLLALTLAGSVAGMAQA). Residue 36 to 37 (SD) coordinates putrescine. A disulfide bridge connects residues Cys-173 and Cys-236. Asp-244 and Asp-275 together coordinate putrescine.

Belongs to the bacterial solute-binding protein PotD/PotF family.

It is found in the periplasm. The protein localises to the secreted. Functionally, putrescine-binding protein probably required for putrescine uptake into cells. Binds putrescine with high affinity, spermidine with relatively low affinity. Does not bind cadaverine or spermine. Putrescine binding induces large inter-domain conformational changes. The sequence is that of Putrescine-binding periplasmic protein SpuD (spuD) from Pseudomonas aeruginosa (strain UCBPP-PA14).